A 490-amino-acid polypeptide reads, in one-letter code: ATP synthase subunit beta, chloroplastic (490 aa).

T6 bears the Phosphothreonine mark. Phosphoserine is present on S13. An ATP-binding site is contributed by G172–T179.

Belongs to the ATPase alpha/beta chains family. As to quaternary structure, F-type ATPases have 2 components, CF(1) - the catalytic core - and CF(0) - the membrane proton channel. CF(1) has five subunits: alpha(3), beta(3), gamma(1), delta(1), epsilon(1). CF(0) has four main subunits: a(1), b(1), b'(1) and c(9-12).

It localises to the plastid. The protein resides in the chloroplast thylakoid membrane. It catalyses the reaction ATP + H2O + 4 H(+)(in) = ADP + phosphate + 5 H(+)(out). In terms of biological role, produces ATP from ADP in the presence of a proton gradient across the membrane. The catalytic sites are hosted primarily by the beta subunits. This is ATP synthase subunit beta, chloroplastic from Aethionema cordifolium (Lebanon stonecress).